The following is a 330-amino-acid chain: D-lactate dehydrogenase (330 aa).

NAD(+) is bound by residues 156 to 157 (RI), D176, 206 to 207 (VP), 233 to 235 (AAR), and D259. R235 is a catalytic residue. E264 is a catalytic residue. H296 serves as the catalytic Proton donor.

Belongs to the D-isomer specific 2-hydroxyacid dehydrogenase family.

The enzyme catalyses (R)-lactate + NAD(+) = pyruvate + NADH + H(+). This Staphylococcus aureus (strain Mu50 / ATCC 700699) protein is D-lactate dehydrogenase (ldhD).